Consider the following 806-residue polypeptide: Leucine--tRNA ligase (806 aa).

Residues 38–48 (PYPSGEIHMGH) carry the 'HIGH' region motif. Positions 572 to 576 (KMSKS) match the 'KMSKS' region motif. Lysine 575 serves as a coordination point for ATP.

Belongs to the class-I aminoacyl-tRNA synthetase family.

The protein resides in the cytoplasm. It catalyses the reaction tRNA(Leu) + L-leucine + ATP = L-leucyl-tRNA(Leu) + AMP + diphosphate. The chain is Leucine--tRNA ligase from Helicobacter acinonychis (strain Sheeba).